The sequence spans 145 residues: Large ribosomal subunit protein bL19 (145 aa).

This sequence belongs to the bacterial ribosomal protein bL19 family.

This protein is located at the 30S-50S ribosomal subunit interface and may play a role in the structure and function of the aminoacyl-tRNA binding site. In Brucella anthropi (strain ATCC 49188 / DSM 6882 / CCUG 24695 / JCM 21032 / LMG 3331 / NBRC 15819 / NCTC 12168 / Alc 37) (Ochrobactrum anthropi), this protein is Large ribosomal subunit protein bL19.